We begin with the raw amino-acid sequence, 585 residues long: MTDRLERKLAIAANQDKADLLIKNGQIVDVFQLETFEGDVVIADGEIVAISDPGTYEAHEEVDAKGAFIAPAFIDGHVHIESSMVAPEQFAKVVVPHGVTTVIADPHEIANVAGVQGVEYMLDASEGIPLDVKMMVPSCVPATPFEHSGARLTAEEVAELFRDPRIFGLGEVMDYPAVLTRDQEMMAKLKAAHSEGRIVDGHGAGLDSVALNAYTAAGIGNDHEAVTPEEAKARLQRGMYLLIREGTAAKDFDALMKAITPMNSRRALFVTDDKHLDELVEEGSIDHHVRKAIQIGVNPLQAIQMASLNAAECFKLAKKGAIAPGFTADLLFIEDLQSLAITHVFKNGTCVAKNGKLIVPIRETVQPPQRLLESVNMKLVTKEQLELSLQSDEEAHLIQIQPGSIVTKHIREKVAVKDGVFIPSVARDQLKLVVAERHHKRGTVGVGIVKGFGLTKGAIATTVAHDSHNIVAVGTNDEDLLAAIKELENIQGGMTIVKDGKVLVSLPLTIGGLMSDQSYDVVCEQIKSVDAAIGALGFVGDFNPFLTLSFLALPVIPEIKLTDQGLFDVTSFSFIDQQVYAEETN.

It belongs to the metallo-dependent hydrolases superfamily. Adenine deaminase family. Mn(2+) serves as cofactor.

It catalyses the reaction adenine + H2O + H(+) = hypoxanthine + NH4(+). This Halalkalibacterium halodurans (strain ATCC BAA-125 / DSM 18197 / FERM 7344 / JCM 9153 / C-125) (Bacillus halodurans) protein is Adenine deaminase.